Reading from the N-terminus, the 453-residue chain is uncharacterized protein (453 aa).

One can recognise a TRAM domain in the interval 5–63 (LLKKNQSVELTIEDLTHDGSGVGKIDGYPLFIPNALPGEKITAKITKLNKNYGFARMEN). [4Fe-4S] cluster contacts are provided by cysteine 76, cysteine 82, cysteine 85, and cysteine 162. S-adenosyl-L-methionine contacts are provided by glutamine 285, tyrosine 314, glutamate 335, and aspartate 383. Cysteine 410 serves as the catalytic Nucleophile.

Belongs to the class I-like SAM-binding methyltransferase superfamily. RNA M5U methyltransferase family.

This is an uncharacterized protein from Listeria innocua serovar 6a (strain ATCC BAA-680 / CLIP 11262).